The following is a 242-amino-acid chain: Large ribosomal subunit protein uL1 (242 aa).

It belongs to the universal ribosomal protein uL1 family. Part of the 50S ribosomal subunit.

In terms of biological role, binds directly to 23S rRNA. The L1 stalk is quite mobile in the ribosome, and is involved in E site tRNA release. Protein L1 is also a translational repressor protein, it controls the translation of the L11 operon by binding to its mRNA. This Sulfurihydrogenibium sp. (strain YO3AOP1) protein is Large ribosomal subunit protein uL1.